The primary structure comprises 416 residues: Gamma-glutamyl phosphate reductase (416 aa).

This sequence belongs to the gamma-glutamyl phosphate reductase family.

The protein resides in the cytoplasm. It catalyses the reaction L-glutamate 5-semialdehyde + phosphate + NADP(+) = L-glutamyl 5-phosphate + NADPH + H(+). It functions in the pathway amino-acid biosynthesis; L-proline biosynthesis; L-glutamate 5-semialdehyde from L-glutamate: step 2/2. Its function is as follows. Catalyzes the NADPH-dependent reduction of L-glutamate 5-phosphate into L-glutamate 5-semialdehyde and phosphate. The product spontaneously undergoes cyclization to form 1-pyrroline-5-carboxylate. This is Gamma-glutamyl phosphate reductase from Streptococcus uberis (strain ATCC BAA-854 / 0140J).